A 231-amino-acid chain; its full sequence is Uracil-DNA glycosylase (231 aa).

D70 (proton acceptor) is an active-site residue.

It belongs to the uracil-DNA glycosylase (UDG) superfamily. UNG family.

Its subcellular location is the cytoplasm. It carries out the reaction Hydrolyzes single-stranded DNA or mismatched double-stranded DNA and polynucleotides, releasing free uracil.. Excises uracil residues from the DNA which can arise as a result of misincorporation of dUMP residues by DNA polymerase or due to deamination of cytosine. In Campylobacter curvus (strain 525.92), this protein is Uracil-DNA glycosylase.